A 674-amino-acid chain; its full sequence is Methionine--tRNA ligase (674 aa).

The 'HIGH' region motif lies at 12–22 (PYANGPIHLGH). Zn(2+) contacts are provided by C143, C146, C156, and C159. Positions 328 to 332 (KMSKS) match the 'KMSKS' region motif. K331 contributes to the ATP binding site. Positions 573–674 (SFAKLDLRIA…EGARPGMRVK (102 aa)) constitute a tRNA-binding domain.

Belongs to the class-I aminoacyl-tRNA synthetase family. MetG type 1 subfamily. Homodimer. Zn(2+) is required as a cofactor.

It is found in the cytoplasm. The enzyme catalyses tRNA(Met) + L-methionine + ATP = L-methionyl-tRNA(Met) + AMP + diphosphate. Is required not only for elongation of protein synthesis but also for the initiation of all mRNA translation through initiator tRNA(fMet) aminoacylation. This chain is Methionine--tRNA ligase, found in Nitrosococcus oceani (strain ATCC 19707 / BCRC 17464 / JCM 30415 / NCIMB 11848 / C-107).